A 320-amino-acid chain; its full sequence is Cytochrome f (320 aa).

An N-terminal signal peptide occupies residues 1–35 (MQTRNTFSWIREEITRSISVSLIIYIITRASISSA). Residues Tyr-36, Cys-56, Cys-59, and His-60 each contribute to the heme site. A helical transmembrane segment spans residues 286 to 306 (VQGLLFFLASVVLAQIFLVLK).

It belongs to the cytochrome f family. The 4 large subunits of the cytochrome b6-f complex are cytochrome b6, subunit IV (17 kDa polypeptide, petD), cytochrome f and the Rieske protein, while the 4 small subunits are PetG, PetL, PetM and PetN. The complex functions as a dimer. Heme serves as cofactor.

The protein resides in the plastid. It is found in the chloroplast thylakoid membrane. Component of the cytochrome b6-f complex, which mediates electron transfer between photosystem II (PSII) and photosystem I (PSI), cyclic electron flow around PSI, and state transitions. The polypeptide is Cytochrome f (Draba nemorosa (Woodland whitlowgrass)).